The primary structure comprises 268 residues: Large ribosomal subunit protein uL4 (268 aa).

It belongs to the universal ribosomal protein uL4 family. Part of the 50S ribosomal subunit.

One of the primary rRNA binding proteins, this protein initially binds near the 5'-end of the 23S rRNA. It is important during the early stages of 50S assembly. It makes multiple contacts with different domains of the 23S rRNA in the assembled 50S subunit and ribosome. Functionally, forms part of the polypeptide exit tunnel. The sequence is that of Large ribosomal subunit protein uL4 from Nanoarchaeum equitans (strain Kin4-M).